A 213-amino-acid polypeptide reads, in one-letter code: Orotate phosphoribosyltransferase (213 aa).

K26 serves as a coordination point for 5-phospho-alpha-D-ribose 1-diphosphate. 34–35 (FF) provides a ligand contact to orotate. 5-phospho-alpha-D-ribose 1-diphosphate is bound by residues 72-73 (YK), R99, K100, K103, H105, and 124-132 (DDVITAGTA). Orotate contacts are provided by T128 and R156.

Belongs to the purine/pyrimidine phosphoribosyltransferase family. PyrE subfamily. As to quaternary structure, homodimer. It depends on Mg(2+) as a cofactor.

It carries out the reaction orotidine 5'-phosphate + diphosphate = orotate + 5-phospho-alpha-D-ribose 1-diphosphate. It functions in the pathway pyrimidine metabolism; UMP biosynthesis via de novo pathway; UMP from orotate: step 1/2. Catalyzes the transfer of a ribosyl phosphate group from 5-phosphoribose 1-diphosphate to orotate, leading to the formation of orotidine monophosphate (OMP). This Klebsiella pneumoniae subsp. pneumoniae (strain ATCC 700721 / MGH 78578) protein is Orotate phosphoribosyltransferase.